The primary structure comprises 546 residues: MQLNKLMLGFMLCASALADDGQQAAEPHTSANFCKIDKDQQVGSTCDITFHELNEINEQIRPQLARLVKTDFFRYFKLDLYKECPFWSDNNGYCVNRACAVDVVDDWESVPDIWQPEVLGGLDEDSVKSEGGESDECSFLNELCGRRREFARPEPLSIDYCDVTDFTNKDSVLVDLVANPERFTGYGGEQSAQIWSAIYKENCFTLGEQGFCLAKDVFYRLISGLHASIATHLSNDYLDTKTGKWGPNLELFMARVGNHPDRVANIYFNFAVVAKALWKIQPYLERVEFCNVYDTNVKDMISNVVSRLDSRVFNEDLLFQDDISMRMKDDFRRRFKNVTKIMDCVHCDRCRMWGKVQTTGYATSLKILFEMDAGDEKARQRVVDKLTKYELIGLFNTFDRISKSVNAINNFERMYHSQMETNTSSIAAFFQNNFFRLGFTETEDQETSNATADMPLPEDSASDNEPYFADLKIPARRSKKQTKEESTSALQQELQGVYHALQFIWNSYVNLPRNLLILVLDVANTWFNNFIGVPTQINILGDDASD.

The first 18 residues, 1 to 18, serve as a signal peptide directing secretion; that stretch reads MQLNKLMLGFMLCASALA. Cystine bridges form between C84–C344, C94–C99, C137–C161, C144–C290, and C347–C350. FAD is bound by residues R182, T184, W195, S223, H226, and R255. A glycan (N-linked (GlcNAc...) asparagine) is linked at N337. C347 functions as the Nucleophile in the catalytic mechanism. The active site involves C350. Residues N422 and N449 are each glycosylated (N-linked (GlcNAc...) asparagine).

The protein belongs to the EROs family. May function both as a monomer and a homodimer. FAD is required as a cofactor.

It is found in the endoplasmic reticulum membrane. Essential oxidoreductase that oxidizes proteins in the endoplasmic reticulum to produce disulfide bonds. Acts by oxidizing directly PDI1 isomerase through a direct disulfide exchange. Does not act as a direct oxidant of folding substrate, but relies on PDI1 to transfer oxidizing equivalent. Does not oxidize all pdi related proteins, suggesting that it can discriminate between PDI1 and related proteins. Its reoxidation probably involves electron transfer to molecular oxygen via FAD. Acts independently of glutathione. May be responsible for a significant proportion of reactive oxygen species (ROS) in the cell, thereby being a source of oxidative stress. This chain is Endoplasmic reticulum oxidoreductin-1 (ERO1), found in Eremothecium gossypii (strain ATCC 10895 / CBS 109.51 / FGSC 9923 / NRRL Y-1056) (Yeast).